A 452-amino-acid chain; its full sequence is Phosphoglucosamine mutase (452 aa).

The active-site Phosphoserine intermediate is the Ser-108. Residues Ser-108, Asp-247, Asp-249, and Asp-251 each coordinate Mg(2+). A Phosphoserine modification is found at Ser-108.

This sequence belongs to the phosphohexose mutase family. Mg(2+) serves as cofactor. In terms of processing, activated by phosphorylation.

The catalysed reaction is alpha-D-glucosamine 1-phosphate = D-glucosamine 6-phosphate. Catalyzes the conversion of glucosamine-6-phosphate to glucosamine-1-phosphate. This chain is Phosphoglucosamine mutase, found in Paraburkholderia phytofirmans (strain DSM 17436 / LMG 22146 / PsJN) (Burkholderia phytofirmans).